We begin with the raw amino-acid sequence, 395 residues long: Neuromedin-U receptor 2 (395 aa).

Residues 1–41 (MGKLENASWIHDPLMKYLNSTEEYLAHLCGPKRSDLSLPVS) are Extracellular-facing. N-linked (GlcNAc...) asparagine glycosylation is found at Asn-6 and Asn-19. Residues 42 to 62 (VAYALIFLVGVMGNLLVCMVI) traverse the membrane as a helical segment. At 63–74 (VRHQTLKTPTNY) the chain is on the cytoplasmic side. Residues 75–95 (YLFSLAVSDLLVLLLGMPLEI) form a helical membrane-spanning segment. At 96 to 115 (YEMWHNYPFLFGPVGCYFKT) the chain is on the extracellular side. Cys-111 and Cys-196 are joined by a disulfide. The chain crosses the membrane as a helical span at residues 116–138 (ALFETVCFASILSVTTVSVERYV). The Cytoplasmic segment spans residues 139-157 (AIVHPFRAKLESTRRRALR). Residues 158–178 (ILSLVWSFSVVFSLPNTSIHG) form a helical membrane-spanning segment. Residues 179 to 212 (IKFQHFPNGSSVPGSATCTVTKPMWVYNLIIQAT) lie on the Extracellular side of the membrane. An N-linked (GlcNAc...) asparagine glycan is attached at Asn-186. A helical membrane pass occupies residues 213–233 (SFLFYILPMTLISVLYYLMGL). The Cytoplasmic segment spans residues 234 to 257 (RLKRDESLEANKVAVNIHRPSRKS). Residues 258-278 (VTKMLFVLVLVFAICWTPFHV) traverse the membrane as a helical segment. Residues 279-293 (DRLFFSFVEEWTESL) lie on the Extracellular side of the membrane. A helical transmembrane segment spans residues 294–314 (AAVFNLIHVVSGVFFYLSSAV). At 315-395 (NPIIYNLLSR…TTAPCAGEVP (81 aa)) the chain is on the cytoplasmic side. Positions 374–395 (FPGQSSIHNTNLTTAPCAGEVP) are disordered. Polar residues predominate over residues 375–387 (PGQSSIHNTNLTT).

The protein belongs to the G-protein coupled receptor 1 family. In terms of tissue distribution, the highest level is detected in the uterus. In the central nervous system, high expression levels were found in the hypothalamus and moderate levels in both the medulla oblongata and spinal cord. Expressed in the hypothalamic paraventricular nucleus (PVN) and suprachiasmatic nuclei (SCN) of the hypothalamus. Expression is low in the gastrointestinal tract. In other peripheral tissues, moderate expression was observed in the lung and ovary.

It is found in the cell membrane. Receptor for the neuromedin-U and neuromedin-S neuropeptides. The protein is Neuromedin-U receptor 2 (Nmur2) of Rattus norvegicus (Rat).